We begin with the raw amino-acid sequence, 400 residues long: Large envelope protein (400 aa).

Methionine 1 carries the post-translational modification N-acetylmethionine. 2 disordered regions span residues methionine 1–aspartate 50 and isoleucine 84–histidine 116. A lipid anchor (N-myristoyl glycine; by host) is attached at glycine 2. The interval glycine 2 to alanine 119 is pre-S1. The interval glycine 2 to asparagine 174 is pre-S. Over glycine 2–glycine 181 the chain is Virion surface; in external conformation. Residues glycine 2 to arginine 253 are Intravirion; in internal conformation-facing. A glycan (N-linked (GlcNAc...) asparagine) is linked at tryptophan 4. The span at serine 96–threonine 106 shows a compositional bias: polar residues. The tract at residues methionine 120–asparagine 174 is pre-S2. The helical transmembrane segment at leucine 182–isoleucine 202 threads the bilayer. Residues proline 203 to arginine 253 are Intravirion; in external conformation-facing. A helical transmembrane segment spans residues phenylalanine 254–tyrosine 274. Over glutamine 275–serine 348 the chain is Virion surface. A glycan (N-linked (GlcNAc...) asparagine; by host) is linked at asparagine 320. The helical transmembrane segment at leucine 349–isoleucine 369 threads the bilayer. Residues tryptophan 370 to tryptophan 375 lie on the Intravirion side of the membrane. A helical membrane pass occupies residues glycine 376–valine 398. The Virion surface portion of the chain corresponds to tyrosine 399–isoleucine 400.

It belongs to the orthohepadnavirus major surface antigen family. In terms of assembly, interacts (via its myristoylated pre-S1 region) with the host SLC10A1/NTCP; this interaction is essential for viral entry. In its internal form (Li-HBsAg), interacts with the capsid protein and with the isoform S. Interacts with host chaperone CANX. As to quaternary structure, associates with host chaperone CANX through its pre-S2 N glycan; this association may be essential for isoform M proper secretion. In terms of assembly, interacts with isoform L. Interacts with the antigens of satellite virus HDV (HDVAgs); this interaction is required for encapsidation of HDV genomic RNA. Isoform M is N-terminally acetylated by host at a ratio of 90%, and N-glycosylated by host at the pre-S2 region. Post-translationally, myristoylated; this modification is essential for its interaction with the host protein SLC10A1/NTCP.

It localises to the virion membrane. In terms of biological role, the large envelope protein exists in two topological conformations, one which is termed 'external' or Le-HBsAg and the other 'internal' or Li-HBsAg. In its external conformation the protein attaches the virus to cell receptors and thereby initiating infection. This interaction determines the species specificity and liver tropism. This attachment induces virion internalization predominantly through caveolin-mediated endocytosis. The large envelope protein also assures fusion between virion membrane and endosomal membrane. In its internal conformation the protein plays a role in virion morphogenesis and mediates the contact with the nucleocapsid like a matrix protein. Functionally, the middle envelope protein plays an important role in the budding of the virion. It is involved in the induction of budding in a nucleocapsid independent way. In this process the majority of envelope proteins bud to form subviral lipoprotein particles of 22 nm of diameter that do not contain a nucleocapsid. This Hepatitis B virus genotype B1 (isolate Japan/Ry30/2002) (HBV-B) protein is Large envelope protein.